Here is a 294-residue protein sequence, read N- to C-terminus: 1D-myo-inositol 2-acetamido-2-deoxy-alpha-D-glucopyranoside deacetylase (294 aa).

The Zn(2+) site is built by H13, D16, and H148.

Belongs to the MshB deacetylase family. The cofactor is Zn(2+).

The enzyme catalyses 1D-myo-inositol 2-acetamido-2-deoxy-alpha-D-glucopyranoside + H2O = 1D-myo-inositol 2-amino-2-deoxy-alpha-D-glucopyranoside + acetate. Catalyzes the deacetylation of 1D-myo-inositol 2-acetamido-2-deoxy-alpha-D-glucopyranoside (GlcNAc-Ins) in the mycothiol biosynthesis pathway. This chain is 1D-myo-inositol 2-acetamido-2-deoxy-alpha-D-glucopyranoside deacetylase, found in Geodermatophilus obscurus (strain ATCC 25078 / DSM 43160 / JCM 3152 / CCUG 61914 / KCC A-0152 / KCTC 9177 / NBRC 13315 / NRRL B-3577 / G-20).